The following is a 674-amino-acid chain: YAP1-binding protein 1 (674 aa).

It belongs to the YBP1 family. As to quaternary structure, interacts with YAP1. Forms a peroxide stress induced complex with YAP1 in the cytoplasm. Systematic proteome-wide 2-hybrid interaction studies suggest that YAP1, HYR1/GPX3, and YBP1 all interact with the nuclear pore complex subunit NUP116, which is involved in nucleocytoplasmic transport.

It localises to the cytoplasm. In terms of biological role, involved in oxidative stress response and redox homeostasis. Required for hydrogen peroxide-induced oxidation and nuclear localization (activation) of YAP1. Functions probably in concert with HYP1/GPX3, the actual YAP1 modifying enzyme. YBP1 is not required for HYP1/GPX3-independent, diamide-induced oxidation of YAP1. The polypeptide is YAP1-binding protein 1 (Saccharomyces cerevisiae (strain ATCC 204508 / S288c) (Baker's yeast)).